The sequence spans 252 residues: Imidazole glycerol phosphate synthase subunit HisF (252 aa).

Catalysis depends on residues aspartate 11 and aspartate 130.

The protein belongs to the HisA/HisF family. Heterodimer of HisH and HisF.

It is found in the cytoplasm. It catalyses the reaction 5-[(5-phospho-1-deoxy-D-ribulos-1-ylimino)methylamino]-1-(5-phospho-beta-D-ribosyl)imidazole-4-carboxamide + L-glutamine = D-erythro-1-(imidazol-4-yl)glycerol 3-phosphate + 5-amino-1-(5-phospho-beta-D-ribosyl)imidazole-4-carboxamide + L-glutamate + H(+). It participates in amino-acid biosynthesis; L-histidine biosynthesis; L-histidine from 5-phospho-alpha-D-ribose 1-diphosphate: step 5/9. IGPS catalyzes the conversion of PRFAR and glutamine to IGP, AICAR and glutamate. The HisF subunit catalyzes the cyclization activity that produces IGP and AICAR from PRFAR using the ammonia provided by the HisH subunit. This is Imidazole glycerol phosphate synthase subunit HisF from Hyphomonas neptunium (strain ATCC 15444).